A 1010-amino-acid polypeptide reads, in one-letter code: Retinoblastoma-related protein 1 (1010 aa).

The interval 1 to 23 is disordered; it reads MEGAAPPASSGSEVTGAGSGKVD. Residues 419–619 form a domain A region; the sequence is TPVSTAMTTA…EKGSSMYNSL (201 aa). Residues 419 to 861 form a pocket region; it reads TPVSTAMTTA…NEVFIPTVKP (443 aa). The spacer stretch occupies residues 620–730; sequence IVARPTLSAE…PAAGGELCAE (111 aa). The tract at residues 657 to 679 is disordered; the sequence is LPPLPFQKQEHSPDKDEVRSPKR. Over residues 664–679 the composition is skewed to basic and acidic residues; that stretch reads KQEHSPDKDEVRSPKR. A domain B region spans residues 731 to 861; it reads TGIGVFLSKI…NEVFIPTVKP (131 aa). The tract at residues 868 to 898 is disordered; sequence SGTSPNKKNEEKCAADGPYPESPRLSRFPNL.

The protein belongs to the retinoblastoma protein (RB) family.

It localises to the nucleus. Functionally, regulator of biological processes that recruits a histone deacetylase to control gene transcription. May play a role in the entry into mitosis, negatively regulating the cell proliferation. Formation of stable complexes with geminiviridae replication-associated proteins may create a cellular environment which favors viral DNA replication. This chain is Retinoblastoma-related protein 1 (RBR1), found in Oryza sativa subsp. indica (Rice).